Reading from the N-terminus, the 128-residue chain is MYYIMFLYNMLLIIILIFYSIVGVPIIIFNNNYYWDPDIFLFIIYYFIKFIIIFNLYLYYMINYIVYTPSGSPPGRGTYILLYNMLYSYNMFIDYVMKFITCVTYMYLMFWLLSPTPSPYYVSEVPVS.

The protein resides in the mitochondrion. This is an uncharacterized protein from Saccharomyces cerevisiae (strain ATCC 204508 / S288c) (Baker's yeast).